Consider the following 108-residue polypeptide: MSCYTAILKSVGGLALFQVANGAIDLCRHFFMYFCEQKLRPNSFWFVVVRAIASMIMYLVLGIALLYISEQDDKKNTNNANTNNDSNSNNSNNDKRNESSINSNSSPK.

The signal sequence occupies residues 1–22 (MSCYTAILKSVGGLALFQVANG). The Intravirion segment spans residues 23 to 45 (AIDLCRHFFMYFCEQKLRPNSFW). A helical transmembrane segment spans residues 46 to 66 (FVVVRAIASMIMYLVLGIALL). Topologically, residues 67–83 (YISEQDDKKNTNNANTN) are virion surface. The tract at residues 76 to 108 (NTNNANTNNDSNSNNSNNDKRNESSINSNSSPK) is disordered. Residues 77–92 (TNNANTNNDSNSNNSN) are compositionally biased toward low complexity. Asn-84, Asn-89, and Asn-97 each carry an N-linked (GlcNAc...) asparagine; by host glycan. Residues 99–108 (SSINSNSSPK) are compositionally biased toward polar residues.

Belongs to the oerthopoxvirus OPG135 family.

It is found in the virion membrane. It localises to the host cytoplasm. Its function is as follows. Envelope protein. Required for an early step in virion morphogenesis. This chain is Virion membrane protein OPG135 (OPG135), found in Vaccinia virus (strain Western Reserve) (VACV).